Consider the following 107-residue polypeptide: 4-carboxymethyl-4-methylbutenolide mutase (107 aa).

Histidine 26 functions as the Proton donor/acceptor in the catalytic mechanism. Histidine 26 and tyrosine 39 together coordinate 3-methylmuconolactone. The 4-methylmuconolactone site is built by histidine 26 and tyrosine 39.

Belongs to the MmlI family. Homodimer.

The catalysed reaction is 4-methylmuconolactone = 3-methylmuconolactone. With respect to regulation, inhibited by p-chloromercuribenzoate. Its function is as follows. Isomerase involved in the degradation of 4-methylsalicylate and 5-methylsalicylate. Catalyzes the isomerization of the dead-end metabolite 4-methylmuconolactone (4-ML) to 3-methylmuconolactone (3-ML), which can then be further degraded through a modified 3-oxoadipate pathway. Can also use 1-methylbislactone but not 3-methyl-cis,cis-muconate. The sequence is that of 4-carboxymethyl-4-methylbutenolide mutase from Pseudomonas reinekei.